Here is a 366-residue protein sequence, read N- to C-terminus: D-alanine--D-alanine ligase (366 aa).

The ATP-grasp domain occupies Lys-149–Gln-358. Residue Glu-185–Glu-240 participates in ATP binding. Residues Asp-311, Glu-325, and Asn-327 each contribute to the Mg(2+) site.

Belongs to the D-alanine--D-alanine ligase family. It depends on Mg(2+) as a cofactor. Mn(2+) is required as a cofactor.

The protein localises to the cytoplasm. The enzyme catalyses 2 D-alanine + ATP = D-alanyl-D-alanine + ADP + phosphate + H(+). The protein operates within cell wall biogenesis; peptidoglycan biosynthesis. Cell wall formation. The protein is D-alanine--D-alanine ligase of Trichodesmium erythraeum (strain IMS101).